The following is a 22-amino-acid chain: Fuctinin-2 (22 aa).

The interval 1–22 is disordered; it reads ELPGLPKGEKEQQEAIEHIDEV. Residues 7–22 are compositionally biased toward basic and acidic residues; sequence KGEKEQQEAIEHIDEV.

The protein to human SET/PHAPII protein. In terms of assembly, oligomer.

Its subcellular location is the cytoplasm. Has a role in the physiological regulation of fucosylation processes. This chain is Fuctinin-2, found in Rattus norvegicus (Rat).